A 390-amino-acid polypeptide reads, in one-letter code: Magnesium-protoporphyrin IX monomethyl ester [oxidative] cyclase (390 aa).

This sequence belongs to the AcsF family. Fe cation serves as cofactor.

The catalysed reaction is Mg-protoporphyrin IX 13-monomethyl ester + 3 NADPH + 3 O2 + 2 H(+) = 3,8-divinyl protochlorophyllide a + 3 NADP(+) + 5 H2O. Its pathway is porphyrin-containing compound metabolism; chlorophyll biosynthesis (light-independent). Its function is as follows. Catalyzes the formation of the isocyclic ring in chlorophyll biosynthesis. Mediates the cyclase reaction, which results in the formation of divinylprotochlorophyllide (Pchlide) characteristic of all chlorophylls from magnesium-protoporphyrin IX 13-monomethyl ester (MgPMME). This is Magnesium-protoporphyrin IX monomethyl ester [oxidative] cyclase from Prochlorococcus marinus subsp. pastoris (strain CCMP1986 / NIES-2087 / MED4).